The chain runs to 868 residues: Leucine--tRNA ligase (868 aa).

The short motif at 42–52 (PYPSGKLHMGH) is the 'HIGH' region element. A 'KMSKS' region motif is present at residues 627–631 (KMAKS). K630 lines the ATP pocket.

It belongs to the class-I aminoacyl-tRNA synthetase family.

The protein resides in the cytoplasm. It catalyses the reaction tRNA(Leu) + L-leucine + ATP = L-leucyl-tRNA(Leu) + AMP + diphosphate. The protein is Leucine--tRNA ligase of Pseudomonas fluorescens (strain Pf0-1).